The sequence spans 284 residues: Release factor glutamine methyltransferase (284 aa).

Residues 121–125, Asp-144, Trp-172, and Asn-188 contribute to the S-adenosyl-L-methionine site; that span reads GTGTG. A substrate-binding site is contributed by 188 to 191; the sequence is NPPY.

This sequence belongs to the protein N5-glutamine methyltransferase family. PrmC subfamily.

It carries out the reaction L-glutaminyl-[peptide chain release factor] + S-adenosyl-L-methionine = N(5)-methyl-L-glutaminyl-[peptide chain release factor] + S-adenosyl-L-homocysteine + H(+). Methylates the class 1 translation termination release factors RF1/PrfA and RF2/PrfB on the glutamine residue of the universally conserved GGQ motif. The sequence is that of Release factor glutamine methyltransferase from Aliivibrio fischeri (strain ATCC 700601 / ES114) (Vibrio fischeri).